The chain runs to 303 residues: Probable cell division protein WhiA (303 aa).

The H-T-H motif DNA-binding region spans 272–303; that stretch reads SIQQLADSLSRPLTKSGVNHRLRKINKIADEL.

It belongs to the WhiA family.

In terms of biological role, involved in cell division and chromosome segregation. This Streptococcus sanguinis (strain SK36) protein is Probable cell division protein WhiA.